The primary structure comprises 63 residues: Large ribosomal subunit protein eL29 (63 aa).

Positions 1–26 are enriched in basic residues; the sequence is MAKSKNHTAHNQTRKAHRNGIKKPKT. Residues 1–35 are disordered; the sequence is MAKSKNHTAHNQTRKAHRNGIKKPKTYKYPSLKGV.

Belongs to the eukaryotic ribosomal protein eL29 family. As to quaternary structure, component of the large ribosomal subunit. Mature ribosomes consist of a small (40S) and a large (60S) subunit. The 40S subunit contains about 32 different proteins and 1 molecule of RNA (18S). The 60S subunit contains 45 different proteins and 3 molecules of RNA (25S, 5.8S and 5S).

The protein resides in the cytoplasm. In terms of biological role, component of the ribosome, a large ribonucleoprotein complex responsible for the synthesis of proteins in the cell. The small ribosomal subunit (SSU) binds messenger RNAs (mRNAs) and translates the encoded message by selecting cognate aminoacyl-transfer RNA (tRNA) molecules. The large subunit (LSU) contains the ribosomal catalytic site termed the peptidyl transferase center (PTC), which catalyzes the formation of peptide bonds, thereby polymerizing the amino acids delivered by tRNAs into a polypeptide chain. The nascent polypeptides leave the ribosome through a tunnel in the LSU and interact with protein factors that function in enzymatic processing, targeting, and the membrane insertion of nascent chains at the exit of the ribosomal tunnel. The protein is Large ribosomal subunit protein eL29 of Candida albicans (strain SC5314 / ATCC MYA-2876) (Yeast).